Here is a 229-residue protein sequence, read N- to C-terminus: Matrix protein (229 aa).

The dynamin binding signature appears at 2 to 4; the sequence is QRL. Residues 30–33 carry the PPXY motif motif; that stretch reads PPSY. The PTAP/PSAP motif signature appears at 42-45; sequence PTAP.

Belongs to the vesiculoviruses matrix protein family. Homomultimer. Interacts with viral nucleocapsid; this interaction contributes to the virion assembly. Interacts with the viral envelope glycoprotein; this interaction contributes to the virion assembly. Interacts with host RAE1-NUP98 complex. Interacts with host NEDD4 and TSG101. Interacts with host dynamin. Interacts with host NDUFAF4; the interaction inhibits viral propagation and is independent of interferon activation. Interacts with host GTF2H5; the interaction may inhibit host transcription. Interacts with host DRG1. Interaction with host CTDNEP1. Interaction with host ABCE1. Post-translationally, phosphorylated by host.

The protein resides in the virion. It localises to the host endomembrane system. The protein localises to the host nucleus membrane. It is found in the host nucleus. Its subcellular location is the host cytoplasm. Its function is as follows. Forms a double layer around the helical nucleocapsid, the inner matrix layer binding to the N helix and the outer matrix layer binding to the envelope glycoprotein. Plays a major role in assembly and budding of virion, by recruiting cellular partners of the ESCRT complexes that play a key role in releasing the budding particle from the host membrane. Condensates the ribonucleocapsid core during virus assembly. Inhibits the host mRNA nuclear export thereby inducing the shut off of cellular transcription and preventing the interferon signaling and the establishment of antiviral state in infected cells. This shutoff presumably inhibits interferon signaling and thus establishment of antiviral state in virus infected cells. Induces cell-rounding, cytoskeleton disorganization and apoptosis in infected cell. Inhibits host transcription, possibly through interaction with host DNA repair factor IIH/TFIIH GTF2H5 subunit. The polypeptide is Matrix protein (M) (Homo sapiens (Human)).